The chain runs to 1145 residues: Structure-specific endonuclease subunit SLX4 (1145 aa).

The segment at 48–108 (ADIPVQPDPP…GKSKQQPSIS (61 aa)) is disordered. Residues 321-372 (ERETQKCRQLRQQHELVYAELERYYGDPQKLEEEVMQELDELEKLVADNMIE) adopt a coiled-coil conformation. The segment covering 382–393 (EAESSSTGSSPS) has biased composition (low complexity). Disordered regions lie at residues 382–442 (EAES…EDEP), 613–634 (QSSH…SSFS), and 666–689 (SAEK…DLTQ). The segment covering 395–410 (EPPDKRPKMTMEDKEN) has biased composition (basic and acidic residues). Composition is skewed to polar residues over residues 411 to 430 (LQPT…TRCT), 613 to 633 (QSSH…SSSF), and 678 to 689 (YKQSDASVDLTQ).

The protein belongs to the SLX4 family. Forms a heterodimer with SLX1. Interacts with mei-9; catalytic subunit of the MEI-9-ERCC1 endonuclease.

The protein localises to the nucleus. Its function is as follows. Regulatory subunit that interacts with and increases the activity of different structure-specific endonucleases. Has several distinct roles in protecting genome stability by resolving diverse forms of deleterious DNA structures originating from replication and recombination intermediates and from DNA damage. Component of the SLX1-SLX4 structure-specific endonuclease that resolves DNA secondary structures generated during DNA repair and recombination. Has endonuclease activity towards branched DNA substrates, introducing single-strand cuts in duplex DNA close to junctions with ss-DNA. Interacts with the structure-specific MEI-9-ERCC1 endonuclease to generate meiotic crossovers. This is Structure-specific endonuclease subunit SLX4 (mus312) from Drosophila melanogaster (Fruit fly).